The primary structure comprises 110 residues: uncharacterized protein (110 aa).

To M.jannaschii MJ0123 and A.aeolicus AA15.

This is an uncharacterized protein from Methanocaldococcus jannaschii (strain ATCC 43067 / DSM 2661 / JAL-1 / JCM 10045 / NBRC 100440) (Methanococcus jannaschii).